A 171-amino-acid chain; its full sequence is Lipoprotein signal peptidase (171 aa).

A run of 3 helical transmembrane segments spans residues 12-32 (WYWV…WVLA), 67-87 (WQRW…TVWL), and 93-113 (SLLK…GNLV). Catalysis depends on residues Asp123 and Asp141. Residues 137–157 (FNIADSAICIGAVLIIWDAFL) traverse the membrane as a helical segment.

Belongs to the peptidase A8 family.

It localises to the cell inner membrane. The enzyme catalyses Release of signal peptides from bacterial membrane prolipoproteins. Hydrolyzes -Xaa-Yaa-Zaa-|-(S,diacylglyceryl)Cys-, in which Xaa is hydrophobic (preferably Leu), and Yaa (Ala or Ser) and Zaa (Gly or Ala) have small, neutral side chains.. The protein operates within protein modification; lipoprotein biosynthesis (signal peptide cleavage). This protein specifically catalyzes the removal of signal peptides from prolipoproteins. The chain is Lipoprotein signal peptidase from Shewanella baltica (strain OS195).